Reading from the N-terminus, the 155-residue chain is Large ribosomal subunit protein uL11 (155 aa).

This sequence belongs to the universal ribosomal protein uL11 family. Part of the ribosomal stalk of the 50S ribosomal subunit. Interacts with L10 and the large rRNA to form the base of the stalk. L10 forms an elongated spine to which L12 dimers bind in a sequential fashion forming a multimeric L10(L12)X complex.

In terms of biological role, forms part of the ribosomal stalk which helps the ribosome interact with GTP-bound translation factors. The chain is Large ribosomal subunit protein uL11 from Picrophilus torridus (strain ATCC 700027 / DSM 9790 / JCM 10055 / NBRC 100828 / KAW 2/3).